The following is a 64-amino-acid chain: Mitotic-spindle organizing protein 1 (64 aa).

Belongs to the MOZART1 family. As to quaternary structure, part of the gamma-tubulin complex. Interacts directly with alp6/GPC3.

The protein localises to the cytoplasm. The protein resides in the cytoskeleton. It is found in the microtubule organizing center. Its subcellular location is the spindle pole body. In terms of biological role, required for gamma-tubulin complex recruitment to the microtubule organizing center (MTOC). In Schizosaccharomyces pombe (strain 972 / ATCC 24843) (Fission yeast), this protein is Mitotic-spindle organizing protein 1 (mzt1).